A 198-amino-acid chain; its full sequence is Glycerol-3-phosphate acyltransferase (198 aa).

The next 5 helical transmembrane spans lie at Leu-5–Gly-25, Ser-56–Phe-76, Phe-84–Phe-104, Ala-114–Val-134, and Leu-158–Trp-178.

It belongs to the PlsY family. In terms of assembly, probably interacts with PlsX.

Its subcellular location is the cell membrane. It carries out the reaction an acyl phosphate + sn-glycerol 3-phosphate = a 1-acyl-sn-glycero-3-phosphate + phosphate. It participates in lipid metabolism; phospholipid metabolism. Its function is as follows. Catalyzes the transfer of an acyl group from acyl-phosphate (acyl-PO(4)) to glycerol-3-phosphate (G3P) to form lysophosphatidic acid (LPA). This enzyme utilizes acyl-phosphate as fatty acyl donor, but not acyl-CoA or acyl-ACP. The protein is Glycerol-3-phosphate acyltransferase of Listeria monocytogenes serotype 4b (strain CLIP80459).